Here is a 211-residue protein sequence, read N- to C-terminus: Urease accessory protein UreF (211 aa).

The disordered stretch occupies residues 71–93 (DDADRETDARTPAPAARHASRSQ).

Belongs to the UreF family. In terms of assembly, ureD, UreF and UreG form a complex that acts as a GTP-hydrolysis-dependent molecular chaperone, activating the urease apoprotein by helping to assemble the nickel containing metallocenter of UreC. The UreE protein probably delivers the nickel.

The protein localises to the cytoplasm. In terms of biological role, required for maturation of urease via the functional incorporation of the urease nickel metallocenter. This Mycobacterium tuberculosis (strain ATCC 25177 / H37Ra) protein is Urease accessory protein UreF.